Here is a 2195-residue protein sequence, read N- to C-terminus: MTPEAKKRKNQKKKLKQKQKKAAEKAASHSEEPLELPESTINSSFNDDSVNRTESDIASKSDVPPVSSSTNISPANETQLEIPDTQELHHKLLNDSDQHDITADSNDLPDNSIVEHDSVITQTKPAMSQEYEETAAHLSSRNPSLDVVAGELHNNNEHTQKIAVSAVEEDSFNEEEGENHDSIIISSLNDATPSQYNHFLPSDGNLLSPELSSGDTPTHNVPLGTKDNEINDDEYCNDKEISLNANNVLPDELSKEEDERLKLETHVSTEEKKQDIADQETAENLFTSSTEPSENKIRNSGDDTSMLFQDDESDQKVPWEEDVKKDFHNENTNNTQESAPNTDDRDKGYEGNEALKKSESCTAADERSYSEETSEDIFHGHDKQVVEGQNDFTGKNIENESQKLMGEGNHKLPLSAEADIIEPGKDIQDQAEDLFTQSSGDLGEVLPWESTDKNADVTSKSQEKHEDLFAASGNDEKLPWEVSDGEVSSGKTENSMQTSTEKIAEQKFSFLENDDDLLDDDDSFLASSEEEDTVPNTDNTTNLTSKPVEEKKASRYKPIIEEEAGMRQEQVHFTNTTGIVTPQQFHGLTKTGLGTPNQQVSVPNIVSPKPPVVKDNRSNFKINEEKKKSDAYDFPLEIISESSKKGHAKPVAVPTQRFGSGNSFSSLDKPIPQSRKGSNNSNRPPVIPLGTQEPRSSRTNSAISQSPVNYAFPNPYKIQQLQQAPIQSGMPLPNTNIPPPALKVETTVSAPPIRARGVSNASVGSSASFGARHATQYGLNNGVPPVSPYGQATINLPTANKYAPVSPTVQQKQYPSVVQNLGASAVNTPNFVKTHRGHTSSISSYTPNQNEHASRYAPNYQQSYQVPYTSQPVGPVAGNSSYQSQTRSSYAVPMMPQAQTSASIQPHANIQPPTGILPLAPLRPLDPLQAATNLQPRASNITAANSLPLANLPLAENILPEIITHRATSSVAPPRQENNPIKIDNEALLRRQFPIFHWSAANKVVYAVPPIPDQSQYMISSSIVQEIKVTPIDQIIKPNDMLKSFPGPLGSAKLKKKDLTKWMETTIKSISENESSTDMTIWQLLEMKLNDKVNWKNISKLLYNSDELLMYLSQPFPNGDMIPNAYRLDINCQMRVLAFLQTGNHDEALRLALSKRDYAIALLVGSLMGKDRWSEVIQKYLYEGFTAGPNDQKELAHFLLLIFQVFVGNSKMAIKSFYTNNETSQWASENWKSIVAAVLINIPENNEDPLLIPPVVLEFLIEFGIFLTKKGLTAAASTLFIIGNVPLSNEPVMADSDVIFESIGNMNTFESILWDEIYEYIFSYDPKFKGFSSILPQKIYHASLLQEQGLNSLGTKYTDYLSSSVRKLPKKDILTINLTRELSEVASRLSESNTGWLAKPKLSSVWGQLDKSFNKYIGGDDIDALNKKNDKKKVFDGFTPGSSANSSTVDLTQTFTPFQAQVTSQSYVDTTALLHNAHNVPSHSVLHSKPSNVSKGLVEANLPYTHRIGDSLQGSPQRIHNTQFAAAEPQMASLRRVRTDQHTNEKALKSQQILEKKSTAYTPQFGQNHSVPMEKSNSNVPSLFADFPAPPKLGTVPSNYVSSPDLVRRESIISTGSEFLPPPKIGVPTKANSSQGSLMYSPSVEALPIDPVVPQVHETGYNDFGNKHSQKSMPEDESHTSHDNSNADQNTLKDSADVTDETMDIEGPGFNDVKNLLPMEPNHQPTSTVNPIQTISDDIQPILQTNVEVRGTDASKMENSLPSIENERSSEEQPENISKSASSAYLPSTGGLSLENRPLTQDENSISETVQSTYLPAGSISMEAKPISQVQDVPRNVNNKASKLVEQHMAPPKPKSTDATKMNYSPYVPQSTAASADGDESTILKTSPAIYARTHQAHASNPSQYFPLVNQANETASFELSESTSQAQSNGNVASENRFSPIKKAEVVEKDTFQPTIRKASTNQYRAFKPLESDADKYNDVIEDESDDDNMSTDEAKNRKEEKKNVNMKKETKPSNKDIDDKSNGWFGWLKKDTGDKKVYKAKLGHKNTLYYDEKLKRWVNKDATEEEKQKIIESSAPPPPPIVKRKDGGPKTKPRSGPINNSLPPVHATSVIPNNPITGEPLPIKTSPSPTGPNPNNSPSPSSPISRISGVNLTSKKANGLDDLLSLAGGPKPASTRRKKKTARGYVNVMDNIQ.

Over residues 1–20 the composition is skewed to basic residues; that stretch reads MTPEAKKRKNQKKKLKQKQK. The interval 1–112 is disordered; the sequence is MTPEAKKRKN…ADSNDLPDNS (112 aa). Composition is skewed to basic and acidic residues over residues 21-32 and 49-59; these read KAAEKAASHSEE and SVNRTESDIAS. Position 28 is a phosphoserine (Ser28). Positions 66–79 are enriched in polar residues; the sequence is VSSSTNISPANETQ. A Phosphoserine modification is found at Ser73. Residues 86-102 are compositionally biased toward basic and acidic residues; sequence QELHHKLLNDSDQHDIT. Ser144 is subject to Phosphoserine. Disordered regions lie at residues 201-233, 247-381, 436-555, 594-616, and 643-708; these read PSDG…INDD, NVLP…FHGH, TQSS…KASR, GTPN…VKDN, and SKKG…QSPV. Polar residues predominate over residues 210-219; the sequence is ELSSGDTPTH. Positions 257 to 276 are enriched in basic and acidic residues; it reads EDERLKLETHVSTEEKKQDI. A compositionally biased stretch (polar residues) spans 282–292; the sequence is AENLFTSSTEP. Ser313 bears the Phosphoserine mark. The segment covering 314-329 has biased composition (basic and acidic residues); that stretch reads DQKVPWEEDVKKDFHN. The span at 330–341 shows a compositional bias: polar residues; the sequence is ENTNNTQESAPN. 2 stretches are compositionally biased toward basic and acidic residues: residues 342 to 381 and 450 to 479; these read TDDR…FHGH and STDK…EKLP. Ser472 and Ser483 each carry phosphoserine. Positions 489-501 are enriched in polar residues; sequence SGKTENSMQTSTE. A compositionally biased stretch (acidic residues) spans 512–533; sequence ENDDDLLDDDDSFLASSEEEDT. Composition is skewed to polar residues over residues 534 to 545 and 594 to 604; these read VPNTDNTTNLTS and GTPNQQVSVPN. Thr595 is modified (phosphothreonine). Phosphoserine is present on residues Ser607, Ser660, Ser663, Ser665, Ser674, Ser678, Ser681, Ser701, Ser704, Ser706, Ser759, Ser762, Ser765, Ser768, Ser843, Ser1511, Ser1515, Ser1578, Ser1602, Ser1603, Ser1611, and Ser1617. The span at 657–666 shows a compositional bias: polar residues; that stretch reads RFGSGNSFSS. Residues 693-708 are compositionally biased toward polar residues; that stretch reads EPRSSRTNSAISQSPV. 2 disordered regions span residues 1656-1731 and 1751-1804; these read VHET…TVNP and GTDA…QDEN. A compositionally biased stretch (basic and acidic residues) spans 1673–1682; that stretch reads MPEDESHTSH. Composition is skewed to polar residues over residues 1683–1693 and 1775–1786; these read DNSNADQNTLK and ENISKSASSAYL. 2 positions are modified to phosphoserine: Ser1778 and Ser1875. The interval 1917–1936 is disordered; sequence SFELSESTSQAQSNGNVASE. A phosphoserine mark is found at Ser1973, Ser1986, and Ser1992. Positions 1976–2031 are disordered; it reads DKYNDVIEDESDDDNMSTDEAKNRKEEKKNVNMKKETKPSNKDIDDKSNGWFGWLK. Acidic residues predominate over residues 1981 to 1992; it reads VIEDESDDDNMS. Over residues 1994–2023 the composition is skewed to basic and acidic residues; it reads DEAKNRKEEKKNVNMKKETKPSNKDIDDKS. Residue Thr2049 is modified to Phosphothreonine. The span at 2054–2072 shows a compositional bias: basic and acidic residues; that stretch reads EKLKRWVNKDATEEEKQKI. The disordered stretch occupies residues 2054–2195; sequence EKLKRWVNKD…GYVNVMDNIQ (142 aa). A Phosphoserine modification is found at Ser2130. Pro residues predominate over residues 2131–2143; that stretch reads PTGPNPNNSPSPS.

Belongs to the SEC16 family. As to quaternary structure, interacts with SEC23, SEC31 and SED4.

Its subcellular location is the endoplasmic reticulum membrane. Its function is as follows. Involved in the initiation of assembly of the COPII coat required for the formation of transport vesicles from the endoplasmic reticulum (ER) and the selection of cargo molecules. Also involved in autophagy. This is COPII coat assembly protein SEC16 (SEC16) from Saccharomyces cerevisiae (strain ATCC 204508 / S288c) (Baker's yeast).